The primary structure comprises 330 residues: Aspartate--ammonia ligase (330 aa).

This sequence belongs to the class-II aminoacyl-tRNA synthetase family. AsnA subfamily.

It localises to the cytoplasm. The catalysed reaction is L-aspartate + NH4(+) + ATP = L-asparagine + AMP + diphosphate + H(+). It participates in amino-acid biosynthesis; L-asparagine biosynthesis; L-asparagine from L-aspartate (ammonia route): step 1/1. This is Aspartate--ammonia ligase from Glaesserella parasuis serovar 5 (strain SH0165) (Haemophilus parasuis).